A 444-amino-acid chain; its full sequence is Tubulin gamma chain (444 aa).

Residue S144–G150 participates in GTP binding.

This sequence belongs to the tubulin family.

It is found in the cytoplasm. Its subcellular location is the cytoskeleton. The protein localises to the microtubule organizing center. It localises to the centrosome. The protein resides in the cell junction. It is found in the hemidesmosome. Its subcellular location is the adherens junction. Functionally, tubulin is the major constituent of microtubules. The gamma chain is found at microtubule organizing centers (MTOC) such as the spindle poles or the centrosome, suggesting that it is involved in the minus-end nucleation of microtubule assembly. This Caenorhabditis elegans protein is Tubulin gamma chain (tbg-1).